We begin with the raw amino-acid sequence, 285 residues long: Nudix hydrolase 15, mitochondrial (285 aa).

The transit peptide at 1–23 (MFLLYRRLPSFARTTTTTLLCKS) directs the protein to the mitochondrion. The residue at position 24 (Met24) is an N-acetylmethionine. Disordered stretches follow at residues 51-72 (RQYK…TDQE) and 129-152 (THSG…GMTA). Positions 99 to 255 (PKRAAVLICL…DKDYMIWGLT (157 aa)) constitute a Nudix hydrolase domain. The short motif at 140–161 (KAEEDDKDDGMTATREAEEEIG) is the Nudix box element. Mg(2+)-binding residues include Glu155 and Glu159.

This sequence belongs to the Nudix hydrolase family. The cofactor is Mg(2+). Mn(2+) serves as cofactor. As to expression, expressed in roots, leaves, stems and inflorescences.

The protein localises to the mitochondrion. Its function is as follows. Coenzyme A diphosphatase which mediates the cleavage of oxidized CoA. Can use malonyl-CoA, hexanoyl-CoA, lauroyl-CoA, myristoyl-CoA and palmitoyl-CoA as substrates, but not isobutyryl-CoA or propionyl-CoA. In Arabidopsis thaliana (Mouse-ear cress), this protein is Nudix hydrolase 15, mitochondrial (NUDT15).